A 339-amino-acid chain; its full sequence is D-erythrose-4-phosphate dehydrogenase (339 aa).

NAD(+) is bound by residues 12–13 (RI) and arginine 81. Substrate contacts are provided by residues 154–156 (SCT), arginine 200, 213–214 (TK), and arginine 236. The Nucleophile role is filled by cysteine 155. Asparagine 318 provides a ligand contact to NAD(+).

As to quaternary structure, homotetramer.

The protein localises to the cytoplasm. It carries out the reaction D-erythrose 4-phosphate + NAD(+) + H2O = 4-phospho-D-erythronate + NADH + 2 H(+). The protein operates within cofactor biosynthesis; pyridoxine 5'-phosphate biosynthesis; pyridoxine 5'-phosphate from D-erythrose 4-phosphate: step 1/5. Catalyzes the NAD-dependent conversion of D-erythrose 4-phosphate to 4-phosphoerythronate. The protein is D-erythrose-4-phosphate dehydrogenase (epd) of Escherichia coli (strain K12).